Reading from the N-terminus, the 171-residue chain is Co-chaperone protein HscB homolog (171 aa).

A J domain is found at 2 to 74; sequence NHFELFGLPP…ISRAEYLLSQ (73 aa).

This sequence belongs to the HscB family. As to quaternary structure, interacts with HscA and stimulates its ATPase activity.

Its function is as follows. Co-chaperone involved in the maturation of iron-sulfur cluster-containing proteins. Seems to help targeting proteins to be folded toward HscA. This is Co-chaperone protein HscB homolog from Vibrio vulnificus (strain YJ016).